The primary structure comprises 286 residues: 2-dehydro-3-deoxyphosphooctonate aldolase (286 aa).

Belongs to the KdsA family.

It is found in the cytoplasm. It carries out the reaction D-arabinose 5-phosphate + phosphoenolpyruvate + H2O = 3-deoxy-alpha-D-manno-2-octulosonate-8-phosphate + phosphate. Its pathway is carbohydrate biosynthesis; 3-deoxy-D-manno-octulosonate biosynthesis; 3-deoxy-D-manno-octulosonate from D-ribulose 5-phosphate: step 2/3. The protein operates within bacterial outer membrane biogenesis; lipopolysaccharide biosynthesis. This Haemophilus ducreyi (strain 35000HP / ATCC 700724) protein is 2-dehydro-3-deoxyphosphooctonate aldolase.